Here is a 198-residue protein sequence, read N- to C-terminus: Peptidyl-tRNA hydrolase (198 aa).

Residue tyrosine 14 participates in tRNA binding. Catalysis depends on histidine 19, which acts as the Proton acceptor. Residues tyrosine 64, asparagine 66, and asparagine 112 each contribute to the tRNA site.

The protein belongs to the PTH family. Monomer.

It localises to the cytoplasm. It catalyses the reaction an N-acyl-L-alpha-aminoacyl-tRNA + H2O = an N-acyl-L-amino acid + a tRNA + H(+). Its function is as follows. Hydrolyzes ribosome-free peptidyl-tRNAs (with 1 or more amino acids incorporated), which drop off the ribosome during protein synthesis, or as a result of ribosome stalling. Catalyzes the release of premature peptidyl moieties from peptidyl-tRNA molecules trapped in stalled 50S ribosomal subunits, and thus maintains levels of free tRNAs and 50S ribosomes. In Beijerinckia indica subsp. indica (strain ATCC 9039 / DSM 1715 / NCIMB 8712), this protein is Peptidyl-tRNA hydrolase.